The primary structure comprises 212 residues: External core antigen (212 aa).

A signal peptide spans methionine 1–alanine 19. Residues glycine 25–leucine 27 form an HBEAG region. A disordered region spans residues asparagine 165–cysteine 212. Basic residues predominate over residues valine 178–serine 205. The 1; half-length repeat unit spans residues serine 184 to proline 190. The segment at serine 184 to glutamine 206 is 3 X 8 AA repeats of S-P-R-R-R-R-S-Q. Positions serine 184–cysteine 212 are excised as a propeptide. 2 repeat units span residues serine 191–glutamine 198 and serine 199–glutamine 206.

Belongs to the orthohepadnavirus precore antigen family. Homodimerizes. Post-translationally, phosphorylated. Cleaved by host furin.

The protein resides in the secreted. The protein localises to the host nucleus. May regulate immune response to the intracellular capsid in acting as a T-cell tolerogen, by having an immunoregulatory effect which prevents destruction of infected cells by cytotoxic T-cells. This immune regulation may predispose to chronicity during perinatal infections and prevent severe liver injury during adult infections. The protein is External core antigen of Hepatitis B virus genotype D subtype ayw (isolate Italy/CI/1992) (HBV-D).